The primary structure comprises 859 residues: Leucine--tRNA ligase (859 aa).

The 'HIGH' region signature appears at 42 to 52 (PYPSGRLHMGH). The 'KMSKS' region signature appears at 618 to 622 (KMSKS). Lys-621 is an ATP binding site.

The protein belongs to the class-I aminoacyl-tRNA synthetase family.

The protein resides in the cytoplasm. It catalyses the reaction tRNA(Leu) + L-leucine + ATP = L-leucyl-tRNA(Leu) + AMP + diphosphate. This chain is Leucine--tRNA ligase, found in Shewanella sp. (strain MR-4).